The sequence spans 233 residues: Tapetum-specific methyltransferase 1 (233 aa).

K8 contacts substrate. S-adenosyl-L-methionine is bound by residues V52, E74, 76–77, S82, D100, and A129; that span reads GV. Substrate is bound at residue D150. Residue D150 coordinates a divalent metal cation. S-adenosyl-L-methionine is bound at residue D152. D176 and N177 together coordinate a divalent metal cation.

This sequence belongs to the class I-like SAM-binding methyltransferase superfamily. Cation-dependent O-methyltransferase family. CCoAMT subfamily. It depends on a divalent metal cation as a cofactor. Expressed in inflorescences and flower buds. Not detected in roots, leaves or stems. Located exclusively in the tapetum of developing stamen.

Its pathway is aromatic compound metabolism; phenylpropanoid biosynthesis. In terms of biological role, methyltransferase involved in phenylpropanoid polyamine conjugate biosynthesis. In vivo, methylates only one of the 5-hydroxyferuloyl moieties of N1,N5,N10-tri-(hydroxyferuloyl)-spermidine, while is able in vitro to convert all three 5-hydroxyferuloyl residues to the corresponding sinapoyl moieties and to methylate caffeoyl CoA and tricaffeoyl spermidine. The chain is Tapetum-specific methyltransferase 1 (TSM1) from Arabidopsis thaliana (Mouse-ear cress).